Reading from the N-terminus, the 768-residue chain is Protein STRUBBELIG (768 aa).

Residues 1–24 form the signal peptide; it reads MSFTRWEVFFGLSVLALTMPFSAG. Residues 25–341 lie on the Extracellular side of the membrane; that stretch reads VTNLRDVSAI…GSGKFWSTQR (317 aa). Residues cysteine 57 and cysteine 66 are joined by a disulfide bond. Asparagine 70 is a glycosylation site (N-linked (GlcNAc...) asparagine). LRR repeat units follow at residues 94–115, 116–139, 140–162, 164–186, 188–210, and 211–231; these read SIQV…ALPS, SIRN…SFLS, DLSE…FQQL, KLTK…MGDL, SLKI…EDLF, and LTDL…NLLK. N-linked (GlcNAc...) asparagine glycosylation occurs at asparagine 119. The tract at residues 241-334 is disordered; that stretch reads PFNTSIITPP…ISPPSGSGSG (94 aa). A glycan (N-linked (GlcNAc...) asparagine) is linked at asparagine 243. Pro residues-rich tracts occupy residues 248-283 and 291-301; these read TPPP…PFAP and QHPPPSPPLVW. The span at 315–334 shows a compositional bias: polar residues; that stretch reads NSVSGQPTLQISPPSGSGSG. The helical transmembrane segment at 342 to 362 threads the bilayer; it reads IILVVSSVAIIVLVSGLCVTL. Residues 363-768 lie on the Cytoplasmic side of the membrane; sequence WRCCRSKIYN…EIVQDLQHMI (406 aa). The segment at 385–477 is disordered; sequence PYFNKPPSQP…RAAHFPPGLN (93 aa). The span at 439-464 shows a compositional bias: polar residues; the sequence is SYYNKDVNTPQKPLQQPPRQFQSNDT. One can recognise a Protein kinase domain in the interval 497–768; sequence FSEENIIGEG…EIVQDLQHMI (272 aa). Residues 503–511 and lysine 525 each bind ATP; that span reads IGEGSIGNV.

Belongs to the protein kinase superfamily. Ser/Thr protein kinase family. Interacts (via intra-cellular domain) with AN; this interaction is not required for correct subcellular localization and recycling of SUB. Binds to QKY and POQ at the plasma membrane. Binds to QKY at plasmodesmata (PD) in root epidermal cells to promote tissue morphogenesis. In terms of tissue distribution, expressed in leaves, stems, inflorescences, flower buds and developing root epidermis.

It localises to the cell membrane. It is found in the cell junction. Its subcellular location is the plasmodesma. Its activity is regulated as follows. Regulated at the post-transcriptional level. In terms of biological role, regulates the expression of transcription factors that define the cell fates. Acts in a non-cell-autonomous fashion, functions in a radial inside-out signaling process, and mediates cell morphogenesis and cell fate across clonally distinct cell layers in floral primordia, developing ovules, and root meristems. Seems to be required for the regulation of cell shape and the orientation of the mitotic division plane. Involved in root hair specification, in the formation of the outer integument and the shape of organs such as carpels and petals and is necessary for the shape and height of the stem. Non-functional SUB proteins are retained in the endoplasmic reticulum and degraded by endoplasmic reticulum-associated degradation (ERAD). Collaboratively with QKY and POQ, regulates cell growth anisotropy during gynoecium development, thus linking together cell-cell communication and cellular growth. Together with QKY, links RLK-dependent signal transduction and intercellular communication mediated by plasmodesmata (PD) to regulate tissue morphogenesis. In Arabidopsis thaliana (Mouse-ear cress), this protein is Protein STRUBBELIG.